A 173-amino-acid polypeptide reads, in one-letter code: Ferritin heavy chain (173 aa).

The region spanning 6–155 (QNFHEECERG…GYVTNLKRCG (150 aa)) is the Ferritin-like diiron domain. Fe cation-binding residues include glutamate 23, glutamate 58, histidine 61, glutamate 103, and glutamine 137.

Belongs to the ferritin family. In terms of assembly, oligomer of 24 subunits. There are two types of subunits: L (light) chain and H (heavy) chain. The functional molecule is roughly spherical and contains a central cavity into which the insoluble mineral iron core is deposited.

It is found in the cytoplasm. The catalysed reaction is 4 Fe(2+) + O2 + 4 H(+) = 4 Fe(3+) + 2 H2O. In terms of biological role, stores iron in a soluble, non-toxic, readily available form. Important for iron homeostasis. Has ferroxidase activity. Iron is taken up in the ferrous form and deposited as ferric hydroxides after oxidation. This Echinococcus granulosus (Hydatid tapeworm) protein is Ferritin heavy chain.